The chain runs to 762 residues: Ribosome-releasing factor 2, mitochondrial (762 aa).

Residues 1–35 (MLLSLTFPVLRGCTGHLVNRSLQAPRWRVTWKRSY) constitute a mitochondrion transit peptide. The tr-type G domain occupies 54–341 (SKIRNIGIMA…AITAYLPAPN (288 aa)). GTP is bound by residues 63–70 (AHIDAGKT), 127–131 (DTPGH), and 181–184 (NKMD).

The protein belongs to the TRAFAC class translation factor GTPase superfamily. Classic translation factor GTPase family. EF-G/EF-2 subfamily.

Its subcellular location is the mitochondrion. It catalyses the reaction GTP + H2O = GDP + phosphate + H(+). Functionally, mitochondrial GTPase that mediates the disassembly of ribosomes from messenger RNA at the termination of mitochondrial protein biosynthesis. Acts in collaboration with mrrf. GTP hydrolysis follows the ribosome disassembly and probably occurs on the ribosome large subunit. Not involved in the GTP-dependent ribosomal translocation step during translation elongation. The protein is Ribosome-releasing factor 2, mitochondrial (gfm2) of Danio rerio (Zebrafish).